Consider the following 391-residue polypeptide: Phosphoprotein (391 aa).

An N-terminus domain region spans residues methionine 1–alanine 194. Phosphothreonine is present on residues threonine 10, threonine 16, threonine 91, threonine 150, and threonine 165. Phosphoserine is present on serine 188. Residues isoleucine 216 to glycine 279 form a multimerization region. Residues alanine 218–glutamine 245 are a coiled coil. The residue at position 250 (threonine 250) is a Phosphothreonine. At serine 257 the chain carries Phosphoserine. Threonine 258 and threonine 282 each carry phosphothreonine. Phosphoserine is present on residues serine 292 and serine 294. Residue threonine 298 is modified to Phosphothreonine. Residues serine 301 and serine 374 each carry the phosphoserine modification. Positions alanine 343 to isoleucine 391 are interaction with the nucleoprotein. Threonine 375 is subject to Phosphothreonine.

Belongs to the rubulavirus/avulavirus P protein family. In terms of assembly, homotetramer. Interacts (via multimerization domain) with polymerase L; this interaction forms the polymerase L-P complex. Interacts (via N-terminus) with N0 (via Ncore); this interaction allows P to chaperon N0 to avoid N polymerization before encapsidation. Interacts (via C-terminus) with N-RNA template; this interaction positions the polymerase on the template for both transcription and replication. Interacts with host RPS6KB1 kinase; this interaction may play a role in the viral replication and transcription.

It localises to the virion. Its function is as follows. Essential cofactor of the RNA polymerase L that plays a central role in the transcription and replication by forming the polymerase complex with RNA polymerase L and recruiting L to the genomic N-RNA template for RNA synthesis. Also plays a central role in the encapsidation of nascent RNA chains by forming the encapsidation complex with the nucleocapsid protein N (N-P complex). Acts as a chaperone for newly synthesized free N protein, so-called N0, allowing encapsidation of nascent RNA chains during replication. The nucleoprotein protein N prevents excessive phosphorylation of P, which leads to down-regulation of viral transcription/ replication. Participates, together with N, in the formation of viral factories (viroplasms), which are large inclusions in the host cytoplasm where replication takes place. The sequence is that of Phosphoprotein from Homo sapiens (Human).